Reading from the N-terminus, the 142-residue chain is Large ribosomal subunit protein bL21 (142 aa).

The span at 74–84 (RRRQNSKRTRG) shows a compositional bias: basic residues. The interval 74-142 (RRRQNSKRTR…KAAAKAESAE (69 aa)) is disordered. The segment covering 107-125 (KAAEKKAPKADAAEGEAAK) has biased composition (basic and acidic residues). Positions 126-135 (PKKAAPKKAA) are enriched in basic residues.

This sequence belongs to the bacterial ribosomal protein bL21 family. Part of the 50S ribosomal subunit. Contacts protein L20.

Its function is as follows. This protein binds to 23S rRNA in the presence of protein L20. This chain is Large ribosomal subunit protein bL21, found in Brucella melitensis biotype 2 (strain ATCC 23457).